A 482-amino-acid chain; its full sequence is Glycogen synthase 2 (482 aa).

Lys-18 serves as a coordination point for ADP-alpha-D-glucose.

Belongs to the glycosyltransferase 1 family. Bacterial/plant glycogen synthase subfamily.

It catalyses the reaction [(1-&gt;4)-alpha-D-glucosyl](n) + ADP-alpha-D-glucose = [(1-&gt;4)-alpha-D-glucosyl](n+1) + ADP + H(+). The protein operates within glycan biosynthesis; glycogen biosynthesis. In terms of biological role, synthesizes alpha-1,4-glucan chains using ADP-glucose. This Bradyrhizobium diazoefficiens (strain JCM 10833 / BCRC 13528 / IAM 13628 / NBRC 14792 / USDA 110) protein is Glycogen synthase 2.